A 294-amino-acid chain; its full sequence is ATP phosphoribosyltransferase (294 aa).

The protein belongs to the ATP phosphoribosyltransferase family. Long subfamily. It depends on Mg(2+) as a cofactor.

Its subcellular location is the cytoplasm. The catalysed reaction is 1-(5-phospho-beta-D-ribosyl)-ATP + diphosphate = 5-phospho-alpha-D-ribose 1-diphosphate + ATP. It functions in the pathway amino-acid biosynthesis; L-histidine biosynthesis; L-histidine from 5-phospho-alpha-D-ribose 1-diphosphate: step 1/9. With respect to regulation, feedback inhibited by histidine. Functionally, catalyzes the condensation of ATP and 5-phosphoribose 1-diphosphate to form N'-(5'-phosphoribosyl)-ATP (PR-ATP). Has a crucial role in the pathway because the rate of histidine biosynthesis seems to be controlled primarily by regulation of HisG enzymatic activity. In Prosthecochloris aestuarii (strain DSM 271 / SK 413), this protein is ATP phosphoribosyltransferase.